Here is a 528-residue protein sequence, read N- to C-terminus: (R)-citramalate synthase (528 aa).

Residues 4–266 enclose the Pyruvate carboxyltransferase domain; the sequence is VKLYDTTLRD…RECIGDDQLR (263 aa).

It belongs to the alpha-IPM synthase/homocitrate synthase family.

It carries out the reaction pyruvate + acetyl-CoA + H2O = (3R)-citramalate + CoA + H(+). It functions in the pathway amino-acid biosynthesis; L-isoleucine biosynthesis; 2-oxobutanoate from pyruvate: step 1/3. Functionally, catalyzes the condensation of pyruvate and acetyl-coenzyme A to form (R)-citramalate. Makes part of the main pathway for isoleucine biosynthesis in G.sulfurreducens, i.e. the citramalate-dependent pathway. This Geobacter sulfurreducens (strain ATCC 51573 / DSM 12127 / PCA) protein is (R)-citramalate synthase.